We begin with the raw amino-acid sequence, 204 residues long: MDRVLLLLSVLTLGVSSQQIIENQRLFSMDATRVQHLHLLAQRLFSDFESSLQTEEQRQLNKIFLQDFCNSDYIISPIDKHETQRSSVLKLLSISYRLVESWEFPSRSLSGGSAPRNQISPKLSELKMGILLLIRANQDAAEIFPDNSALQLAPYGNYYQSLSGEESLRRTYELLACFKKDMHKVETYLTVAKCRLSPEANCTL.

The N-terminal stretch at 1–17 (MDRVLLLLSVLTLGVSS) is a signal peptide. The residue at position 18 (glutamine 18) is a Pyrrolidone carboxylic acid. Histidine 36 serves as a coordination point for Zn(2+). A disulfide bridge links cysteine 69 with cysteine 177. Residue glutamate 186 participates in Zn(2+) binding. The cysteines at positions 194 and 202 are disulfide-linked.

It belongs to the somatotropin/prolactin family.

The protein localises to the secreted. Its function is as follows. Growth hormone plays an important role in growth control and is involved in the regulation of several anabolic processes. Implicated as an osmoregulatory substance important for seawater adaptation. In Larimichthys crocea (Large yellow croaker), this protein is Somatotropin (gh).